Here is a 643-residue protein sequence, read N- to C-terminus: Hepatoma-derived growth factor-related protein 2 (643 aa).

The region spanning 7–64 (PGDLVFAKMKGYPHWPARIDDVKDGAVKPPPNKYPIFFYGTHETAFLAPKDLFPYEKC) is the PWWP domain. Disordered regions lie at residues 88 to 450 (PQAS…KKPE) and 548 to 643 (LESQ…NQTS). Low complexity predominate over residues 90 to 104 (ASYSLPPASVSSSDS). Positions 107–116 (PEEKSTARSD) are enriched in basic and acidic residues. Residues 176–187 (SEEENSDSDQDF) show a composition bias toward acidic residues. Residues 194 to 204 (PRIQRRTTNLG) are compositionally biased toward polar residues. Residues 209-231 (IFAESDSKSDESEDEKKEEEQKK) are compositionally biased toward basic and acidic residues. Residues 232-249 (SPSSSSASSPSLSSSDSE) show a composition bias toward low complexity. Composition is skewed to basic and acidic residues over residues 290 to 353 (SVDR…DSSK), 373 to 382 (EDKKPVKEVK), and 417 to 450 (RPSESARKTNQKEKRGERPRGRPSKVEKEKKKPE). Residues 295-345 (SEWKKRDEERRRELEERRKKEQEEQLRRLREEEREEEERKKREKAEKGDKS) adopt a coiled-coil conformation. The segment covering 549-559 (ESQQKTVQKVN) has biased composition (polar residues). Basic and acidic residues-rich tracts occupy residues 560-575 (TAEKDPEEEKQTGKVE) and 608-622 (NKTEMETKQNNHAEH).

The protein belongs to the HDGF family.

Its subcellular location is the nucleus. It is found in the cytoplasm. Functionally, may act as a regulator of myogenesis. Promotes the repair of DNA double-strand breaks (DSBs) through the homologous recombination pathway by facilitating the recruitment of the DNA endonuclease RBBP8 to the DSBs. This is Hepatoma-derived growth factor-related protein 2 (hdgfl2) from Xenopus tropicalis (Western clawed frog).